We begin with the raw amino-acid sequence, 1135 residues long: Exportin-6-A (1135 aa).

The 67-residue stretch at 31-97 (IESLLNNFAQ…RNSLPKLLLS (67 aa)) folds into the Importin N-terminal domain.

The protein belongs to the exportin family. As to expression, expressed during meiotic maturation 2 hours after germinal vesicle break down (GVBD) and in unfertilized and fertilized eggs, but not in oocytes (at protein level). Expressed in somatic cells, in oocytes, during meiotic maturation and in unfertilized and fertilized eggs.

Its subcellular location is the nucleus. The protein resides in the cytoplasm. Its function is as follows. Mediates the nuclear export of actin and profilin-actin complexes in somatic cells. Oocyte nuclei lack active actin export. This chain is Exportin-6-A (xpo6-a), found in Xenopus laevis (African clawed frog).